Reading from the N-terminus, the 207-residue chain is Large ribosomal subunit protein uL4 (207 aa).

The interval 48-70 (KAQKTRSEVSGGGAKPWRQKGTG) is disordered.

Belongs to the universal ribosomal protein uL4 family. In terms of assembly, part of the 50S ribosomal subunit.

Functionally, one of the primary rRNA binding proteins, this protein initially binds near the 5'-end of the 23S rRNA. It is important during the early stages of 50S assembly. It makes multiple contacts with different domains of the 23S rRNA in the assembled 50S subunit and ribosome. In terms of biological role, forms part of the polypeptide exit tunnel. In Francisella philomiragia subsp. philomiragia (strain ATCC 25017 / CCUG 19701 / FSC 153 / O#319-036), this protein is Large ribosomal subunit protein uL4.